Consider the following 290-residue polypeptide: 3-keto-disaccharide hydrolase (290 aa).

A signal peptide spans 1–19; that stretch reads MKKVFYPLACCLAAGVLVS. Cys20 carries the N-palmitoyl cysteine lipid modification. A lipid anchor (S-diacylglycerol cysteine) is attached at Cys20.

The protein localises to the cell membrane. The catalysed reaction is 3-dehydro-alpha,alpha-trehalose + H2O = 3-dehydro-D-glucose + D-glucose. 3-keto-disaccharide hydrolase that preferentially hydrolyzes 3-keto-trehalose (3-dehydro-alpha,alpha-trehalose). Important for disaccharide utilization in the human gut. Also shows hydrolysis activity with the glucosinolates glucoraphanin or glucobrassicin, but with much lower efficiency. The sequence is that of 3-keto-disaccharide hydrolase from Bacteroides thetaiotaomicron (strain ATCC 29148 / DSM 2079 / JCM 5827 / CCUG 10774 / NCTC 10582 / VPI-5482 / E50).